We begin with the raw amino-acid sequence, 292 residues long: Putative OX-2 membrane glycoprotein homolog (292 aa).

The N-terminal stretch at 1–18 (MSPLMLRLLPLLCIIISA) is a signal peptide. Residues 24 to 136 (PETSPSLVYE…TFTVDNEKTS (113 aa)) form the Ig-like V-type domain. A disulfide bridge links cysteine 42 with cysteine 126. N-linked (GlcNAc...) asparagine; by host glycans are attached at residues asparagine 45, asparagine 57, asparagine 72, and asparagine 195. Residues 147-237 (PIVVLYFRYL…TNQKASALVT (91 aa)) enclose the Ig-like C2-type domain. The helical transmembrane segment at 263–283 (VFTWIVPLILILIISVMVLLI) threads the bilayer.

It is found in the host membrane. The polypeptide is Putative OX-2 membrane glycoprotein homolog (U85) (Human herpesvirus 6B (strain Z29) (HHV-6 variant B)).